The sequence spans 162 residues: HTH-type transcriptional regulator IscR (162 aa).

One can recognise an HTH rrf2-type domain in the interval 2-131; sequence RLTSKGRYAV…NNITLGELVN (130 aa). The segment at residues 28-51 is a DNA-binding region (H-T-H motif); sequence LADISERQGISLSYLEQLFSRLRK. The [2Fe-2S] cluster site is built by C92, C98, and C104. Residues 140–162 form a disordered region; it reads GRQHTHDAPRTRTQDAIDVKLRA. Residues 143-162 are compositionally biased toward basic and acidic residues; that stretch reads HTHDAPRTRTQDAIDVKLRA.

The cofactor is [2Fe-2S] cluster.

Its function is as follows. Regulates the transcription of several operons and genes involved in the biogenesis of Fe-S clusters and Fe-S-containing proteins. This chain is HTH-type transcriptional regulator IscR, found in Shigella flexneri.